A 262-amino-acid polypeptide reads, in one-letter code: 1-(5-phosphoribosyl)-5-[(5-phosphoribosylamino)methylideneamino] imidazole-4-carboxamide isomerase (262 aa).

D8 functions as the Proton acceptor in the catalytic mechanism. D130 (proton donor) is an active-site residue.

Belongs to the HisA/HisF family.

It is found in the cytoplasm. It carries out the reaction 1-(5-phospho-beta-D-ribosyl)-5-[(5-phospho-beta-D-ribosylamino)methylideneamino]imidazole-4-carboxamide = 5-[(5-phospho-1-deoxy-D-ribulos-1-ylimino)methylamino]-1-(5-phospho-beta-D-ribosyl)imidazole-4-carboxamide. The protein operates within amino-acid biosynthesis; L-histidine biosynthesis; L-histidine from 5-phospho-alpha-D-ribose 1-diphosphate: step 4/9. This is 1-(5-phosphoribosyl)-5-[(5-phosphoribosylamino)methylideneamino] imidazole-4-carboxamide isomerase from Chloroherpeton thalassium (strain ATCC 35110 / GB-78).